The sequence spans 190 residues: MAVFNKLFKRRHSVSEEIKKDDLQEEVEATETEETVEEVIEETPEKSELELANERADEFENKYLRAHAEMQNIQRRSSEERQQLQRYRSQDLAKAILPSLDNLERALAVEGLTDDVKKGLEMTRDSLIQALKEEGVEEVEVDSFDHNFHMAVQTLPADDEHPADSIAEVFQKGYKLHERLLRPAMVVVYN.

A disordered region spans residues 21–49; that stretch reads DDLQEEVEATETEETVEEVIEETPEKSEL. The segment covering 23 to 42 has biased composition (acidic residues); sequence LQEEVEATETEETVEEVIEE.

The protein belongs to the GrpE family. Homodimer.

Its subcellular location is the cytoplasm. Participates actively in the response to hyperosmotic and heat shock by preventing the aggregation of stress-denatured proteins, in association with DnaK and GrpE. It is the nucleotide exchange factor for DnaK and may function as a thermosensor. Unfolded proteins bind initially to DnaJ; upon interaction with the DnaJ-bound protein, DnaK hydrolyzes its bound ATP, resulting in the formation of a stable complex. GrpE releases ADP from DnaK; ATP binding to DnaK triggers the release of the substrate protein, thus completing the reaction cycle. Several rounds of ATP-dependent interactions between DnaJ, DnaK and GrpE are required for fully efficient folding. The polypeptide is Protein GrpE (Streptococcus pyogenes serotype M3 (strain SSI-1)).